A 385-amino-acid chain; its full sequence is 1-deoxy-D-xylulose 5-phosphate reductoisomerase (385 aa).

Residues Thr-10, Gly-11, Ile-13, Gly-36, and Asn-38 each coordinate NADPH. Position 123 (Lys-123) interacts with 1-deoxy-D-xylulose 5-phosphate. Residue Glu-124 participates in NADPH binding. Asp-148 provides a ligand contact to Mn(2+). 4 residues coordinate 1-deoxy-D-xylulose 5-phosphate: Ser-149, Glu-150, Ser-172, and His-195. Residue Glu-150 coordinates Mn(2+). Gly-201 is a binding site for NADPH. 4 residues coordinate 1-deoxy-D-xylulose 5-phosphate: Ser-208, Asn-213, Lys-214, and Glu-217. Glu-217 provides a ligand contact to Mn(2+).

This sequence belongs to the DXR family. Requires Mg(2+) as cofactor. Mn(2+) serves as cofactor.

The catalysed reaction is 2-C-methyl-D-erythritol 4-phosphate + NADP(+) = 1-deoxy-D-xylulose 5-phosphate + NADPH + H(+). It functions in the pathway isoprenoid biosynthesis; isopentenyl diphosphate biosynthesis via DXP pathway; isopentenyl diphosphate from 1-deoxy-D-xylulose 5-phosphate: step 1/6. Catalyzes the NADPH-dependent rearrangement and reduction of 1-deoxy-D-xylulose-5-phosphate (DXP) to 2-C-methyl-D-erythritol 4-phosphate (MEP). The polypeptide is 1-deoxy-D-xylulose 5-phosphate reductoisomerase (Anaplasma phagocytophilum (strain HZ)).